The sequence spans 388 residues: Succinate--CoA ligase [ADP-forming] subunit beta (388 aa).

The ATP-grasp domain occupies 9–244 (KQLFARYGMP…PSQEDAREAH (236 aa)). ATP-binding positions include Lys-46, 53-55 (GRG), Glu-99, Thr-102, and Glu-107. 2 residues coordinate Mg(2+): Asn-199 and Asp-213. Substrate contacts are provided by residues Asn-264 and 321-323 (GIV).

The protein belongs to the succinate/malate CoA ligase beta subunit family. Heterotetramer of two alpha and two beta subunits. The cofactor is Mg(2+).

It carries out the reaction succinate + ATP + CoA = succinyl-CoA + ADP + phosphate. The catalysed reaction is GTP + succinate + CoA = succinyl-CoA + GDP + phosphate. It functions in the pathway carbohydrate metabolism; tricarboxylic acid cycle; succinate from succinyl-CoA (ligase route): step 1/1. In terms of biological role, succinyl-CoA synthetase functions in the citric acid cycle (TCA), coupling the hydrolysis of succinyl-CoA to the synthesis of either ATP or GTP and thus represents the only step of substrate-level phosphorylation in the TCA. The beta subunit provides nucleotide specificity of the enzyme and binds the substrate succinate, while the binding sites for coenzyme A and phosphate are found in the alpha subunit. In Yersinia pseudotuberculosis serotype O:1b (strain IP 31758), this protein is Succinate--CoA ligase [ADP-forming] subunit beta.